The chain runs to 135 residues: Protein PsiE homolog (135 aa).

4 helical membrane passes run 20–40 (VGLIMLAAILVVFLVKETIHL), 54–74 (YMLIEGIVIYFLYFEFIALIV), 82–102 (HFPLRYFIYIGITAIIRLIIV), and 107–127 (PIDTLIYSGSILVLVVTLYLA).

This sequence belongs to the PsiE family.

The protein localises to the cell inner membrane. The polypeptide is Protein PsiE homolog (Yersinia pseudotuberculosis serotype IB (strain PB1/+)).